Consider the following 145-residue polypeptide: Deoxyuridine 5'-triphosphate nucleotidohydrolase (145 aa).

Substrate is bound by residues 64-66, Asn-77, 81-83, and Met-91; these read RSG and TID.

It belongs to the dUTPase family. The cofactor is Mg(2+).

It catalyses the reaction dUTP + H2O = dUMP + diphosphate + H(+). The protein operates within pyrimidine metabolism; dUMP biosynthesis; dUMP from dCTP (dUTP route): step 2/2. This enzyme is involved in nucleotide metabolism: it produces dUMP, the immediate precursor of thymidine nucleotides and it decreases the intracellular concentration of dUTP so that uracil cannot be incorporated into DNA. This chain is Deoxyuridine 5'-triphosphate nucleotidohydrolase, found in Leptospira borgpetersenii serovar Hardjo-bovis (strain JB197).